Consider the following 146-residue polypeptide: Urease accessory protein UreE 1 (146 aa).

The protein belongs to the UreE family.

It localises to the cytoplasm. Its function is as follows. Involved in urease metallocenter assembly. Binds nickel. Probably functions as a nickel donor during metallocenter assembly. This Pseudomonas syringae pv. syringae (strain B728a) protein is Urease accessory protein UreE 1.